The primary structure comprises 1995 residues: COPII coat assembly protein sec16 (1995 aa).

Basic and acidic residues predominate over residues 1-28 (MDIESDHEPKESSVDLEGRHDSIRKSFE). 7 disordered regions span residues 1–32 (MDIE…ADDI), 61–127 (NIAN…NDNL), 140–198 (MDEP…KIET), 349–378 (VTDT…PETE), 392–496 (FVVQ…SESI), 557–594 (YLPK…SGAF), and 629–661 (YSFQ…QTPN). A compositionally biased stretch (polar residues) spans 61 to 72 (NIANSSSQQSVS). Over residues 82 to 91 (EPKEGVKEES) the composition is skewed to basic and acidic residues. Polar residues predominate over residues 93-112 (LIESNSLDNVQEINPQNTIG). Positions 140-152 (MDEPVVDEDDKLS) are enriched in acidic residues. The span at 153–169 (EEDLSKEDLETTLKGDE) shows a compositional bias: basic and acidic residues. Polar residues-rich tracts occupy residues 358-367 (ENTLVSSENL) and 393-406 (VVQN…TTQK). Composition is skewed to basic and acidic residues over residues 407-416 (TSEDSTDLHT) and 429-442 (FEKE…KLEN). Residues 473–496 (LNSNTGSQPSETQSKPSIDPSESI) are compositionally biased toward polar residues. A compositionally biased stretch (low complexity) spans 561–574 (SSASPPANAPIVSS). Over residues 635–649 (PATPSNPPRSLPPPS) the composition is skewed to pro residues. A compositionally biased stretch (polar residues) spans 650–661 (GQVNAPMSQTPN). S790 carries the phosphoserine modification. Disordered stretches follow at residues 945–994 (MEPV…QHGF), 1029–1063 (SATL…PNQP), 1605–1631 (FYSD…SMNM), 1649–1675 (MDGN…EDNA), and 1777–1995 (APSE…MRNS). Basic and acidic residues predominate over residues 1033 to 1045 (DSDKSSLHKRSAE). Polar residues predominate over residues 1609–1629 (RPTSSGPSYQNRTPLTGQESM). Composition is skewed to basic and acidic residues over residues 1804-1825 (VRQE…ESGK) and 1852-1870 (KLGE…RWVN). Residues 1881-1898 (APPPPPPMALPKAGPPSA) show a composition bias toward pro residues. The span at 1899–1915 (APTSALPPAGPPAGATA) shows a compositional bias: low complexity.

It belongs to the SEC16 family. In terms of assembly, interacts with dil1.

Its subcellular location is the endoplasmic reticulum membrane. Its function is as follows. Involved in the initiation of assembly of the COPII coat required for the formation of transport vesicles from the endoplasmic reticulum (ER) and the selection of cargo molecules. Also involved in autophagy. This chain is COPII coat assembly protein sec16 (sec16), found in Schizosaccharomyces pombe (strain 972 / ATCC 24843) (Fission yeast).